We begin with the raw amino-acid sequence, 187 residues long: Large ribosomal subunit protein bL17 (187 aa).

The disordered stretch occupies residues 122–187; sequence PKVRSSRTST…EADAAEKSDK (66 aa). Residues 127–144 are compositionally biased toward low complexity; the sequence is SRTSTATAPAAAAPAAEA. Composition is skewed to acidic residues over residues 145–157 and 165–180; these read PAEE…EETD and TPAE…VEAD.

Belongs to the bacterial ribosomal protein bL17 family. In terms of assembly, part of the 50S ribosomal subunit. Contacts protein L32.

This chain is Large ribosomal subunit protein bL17, found in Clavibacter michiganensis subsp. michiganensis (strain NCPPB 382).